We begin with the raw amino-acid sequence, 182 residues long: CDP-diacylglycerol--glycerol-3-phosphate 3-phosphatidyltransferase (182 aa).

Topologically, residues 1-12 (MQLNIPTWLTLF) are cytoplasmic. A helical transmembrane segment spans residues 13–37 (RVVLIPFFVLAFYLPFVWAPMVCAI). Topologically, residues 38–60 (IFVFAAATDWFDGFLARRWKQTT) are periplasmic. A helical transmembrane segment spans residues 61-81 (RFGAFLDPVADKVMVAIALVL). The Cytoplasmic segment spans residues 82–86 (VAEHY). Residues 87-107 (HVWWITLPAATMIAREIIISS) traverse the membrane as a helical segment. Over 108-145 (LREWMAEIGKRSSVAVSWIGKVKTTAQMGSLVGLLWRP) the chain is Periplasmic. A helical membrane pass occupies residues 146–168 (DHNIELASFVLLYIAAVLTFWSM). Residues 169 to 181 (FQYLNAAWKDLLE) lie on the Cytoplasmic side of the membrane.

It belongs to the CDP-alcohol phosphatidyltransferase class-I family.

It is found in the cell inner membrane. It carries out the reaction a CDP-1,2-diacyl-sn-glycerol + sn-glycerol 3-phosphate = a 1,2-diacyl-sn-glycero-3-phospho-(1'-sn-glycero-3'-phosphate) + CMP + H(+). It participates in phospholipid metabolism; phosphatidylglycerol biosynthesis; phosphatidylglycerol from CDP-diacylglycerol: step 1/2. In terms of biological role, catalyzes the conversion of cytidine diphosphate diacylglycerol (CDP-DG) and glycerol 3-phosphate into phosphatidylglycerol. Essential for the synthesis of anionic phospholipids, thereby playing a role in balancing the ratio of zwitterionic and anionic phospholipids, which is thought to be important for normal membrane function. The polypeptide is CDP-diacylglycerol--glycerol-3-phosphate 3-phosphatidyltransferase (Yersinia enterocolitica serotype O:8 / biotype 1B (strain NCTC 13174 / 8081)).